Here is a 129-residue protein sequence, read N- to C-terminus: Small ribosomal subunit protein uS11 (129 aa).

The protein belongs to the universal ribosomal protein uS11 family. Part of the 30S ribosomal subunit.

Located on the platform of the 30S subunit. This is Small ribosomal subunit protein uS11 from Haloarcula marismortui (strain ATCC 43049 / DSM 3752 / JCM 8966 / VKM B-1809) (Halobacterium marismortui).